The primary structure comprises 401 residues: E3 ubiquitin-protein ligase DA2 (401 aa).

The RING-type; degenerate zinc-finger motif lies at 59–102 (CPICFLYYPSLNRSRCCMKSICTECFLQMKNPNSARPTQCPFCK). A compositionally biased stretch (basic and acidic residues) spans 139–153 (KEMQDDEEKMQKRLE). The segment at 139 to 164 (KEMQDDEEKMQKRLESCSSSTSAMTG) is disordered.

As to quaternary structure, interacts with DA1 (via C-terminus).

The catalysed reaction is S-ubiquitinyl-[E2 ubiquitin-conjugating enzyme]-L-cysteine + [acceptor protein]-L-lysine = [E2 ubiquitin-conjugating enzyme]-L-cysteine + N(6)-ubiquitinyl-[acceptor protein]-L-lysine.. Its pathway is protein modification; protein ubiquitination. Its function is as follows. E3 ubiquitin-protein ligase involved in the regulation of organ and seed size. Acts synergistically with DA1 to regulate seed size. Functions synergistically with DA1 to restrict cell proliferation in the maternal integuments of ovules and developing seeds. Seems to function independently of BB. Possesses E3 ubiquitin-protein ligase activity in vitro. Polyubiquitinates DA1, DAR1 and DAR2, but not DAR3. This is E3 ubiquitin-protein ligase DA2 from Arabidopsis thaliana (Mouse-ear cress).